Reading from the N-terminus, the 141-residue chain is MAKKVIGFIKLQIPAGAANPAPPVGPALGQKGVNIMEFCKQFNAKTQSEAGMIIPVVITVFSDKSFTFITKTPPAAVLLLKEAKLQKGSGEPNRNKVGTVTREQVKKIAELKMPDLNAFDLRGAEEMIMGTARSMGIVVEG.

The protein belongs to the universal ribosomal protein uL11 family. In terms of assembly, part of the ribosomal stalk of the 50S ribosomal subunit. Interacts with L10 and the large rRNA to form the base of the stalk. L10 forms an elongated spine to which L12 dimers bind in a sequential fashion forming a multimeric L10(L12)X complex. Post-translationally, one or more lysine residues are methylated.

Forms part of the ribosomal stalk which helps the ribosome interact with GTP-bound translation factors. This chain is Large ribosomal subunit protein uL11, found in Chlorobium luteolum (strain DSM 273 / BCRC 81028 / 2530) (Pelodictyon luteolum).